Here is a 180-residue protein sequence, read N- to C-terminus: Membrane protein UL121 (180 aa).

The N-terminal stretch at 1-27 (MWGCGWSRILVLLLLMCMALMARGTYG) is a signal peptide. A helical membrane pass occupies residues 143–163 (LGLLYAVCLILSFSIVTAALW).

It belongs to the HHV-5 UL121 protein family.

It localises to the host membrane. In Human cytomegalovirus (strain Merlin) (HHV-5), this protein is Membrane protein UL121 (UL121).